A 259-amino-acid polypeptide reads, in one-letter code: Small ribosomal subunit protein eS4 (259 aa).

In terms of domain architecture, S4 RNA-binding spans 41–105 (LPLSVLLKER…TDQSFRILYD (65 aa)). Thr-248 is subject to Phosphothreonine. Ser-258 bears the Phosphoserine mark.

It belongs to the eukaryotic ribosomal protein eS4 family.

The polypeptide is Small ribosomal subunit protein eS4 (Tetrahymena thermophila).